We begin with the raw amino-acid sequence, 514 residues long: Beta-secretase 2 (514 aa).

Residues 1 to 19 form the signal peptide; the sequence is MGALLRALLLLVLAQWLLS. Positions 20-62 are excised as a propeptide; the sequence is AVPALAPAPFTLPLQVAGATNHRASAVPGLGTPELPRADGLAL. Topologically, residues 20–469 are extracellular; the sequence is AVPALAPAPF…NEPILWIVSY (450 aa). Positions 88 to 425 constitute a Peptidase A1 domain; sequence YYLEMLIGTP…DRAQRRVGFA (338 aa). The active site involves aspartate 106. A glycan (N-linked (GlcNAc...) asparagine) is linked at asparagine 166. 3 cysteine pairs are disulfide-bonded: cysteine 229–cysteine 429, cysteine 288–cysteine 453, and cysteine 340–cysteine 389. The active site involves aspartate 299. Asparagine 362 is a glycosylation site (N-linked (GlcNAc...) asparagine). Residues 470 to 490 form a helical membrane-spanning segment; it reads ALMSVCGAILLVLILLLLLPL. Residues 491 to 514 are Cytoplasmic-facing; it reads HCRHAPRDPEVVNDESSLVRHRWK.

Belongs to the peptidase A1 family. In terms of assembly, monomer. Interacts with RTN3 and RTN4. Undergoes autoproteolytic cleavage. In terms of processing, glycosylated. In terms of tissue distribution, high expression in pancreatic islets. Expressed at much lower levels in the pituitary, colon, and ovaries and is nearly absent from all the other tissues.

It localises to the cell membrane. The protein resides in the golgi apparatus. It is found in the endoplasmic reticulum. Its subcellular location is the endosome. The protein localises to the melanosome. The catalysed reaction is Broad endopeptidase specificity. Cleaves Glu-Val-Asn-Leu-|-Asp-Ala-Glu-Phe in the Swedish variant of Alzheimer's amyloid precursor protein.. Responsible for the proteolytic processing of the amyloid precursor protein (APP). Cleaves APP, between residues 690 and 691, leading to the generation and extracellular release of beta-cleaved soluble APP, and a corresponding cell-associated C-terminal fragment which is later released by gamma-secretase. It has also been shown that it can cleave APP between residues 671 and 672. Involved in the proteolytic shedding of PMEL at early stages of melanosome biogenesis. Cleaves PMEL within the M-beta fragment to release the amyloidogenic PMEL luminal fragment containing M-alpha and a small portion of M-beta N-terminus. This is a prerequisite step for subsequent processing and assembly of PMEL fibrils into amyloid sheets. Responsible also for the proteolytic processing of CLTRN in pancreatic beta cells. The polypeptide is Beta-secretase 2 (Bace2) (Mus musculus (Mouse)).